Consider the following 90-residue polypeptide: MALDSAIKLEIISKFARGEKDTGSPEVQVALLSRRISDLTEHLKVNVKDHASRLGLLKLVAQRKHLLKYLKKTDYAKYSELISTLGIRDR.

It belongs to the universal ribosomal protein uS15 family. As to quaternary structure, part of the 30S ribosomal subunit. Forms a bridge to the 50S subunit in the 70S ribosome, contacting the 23S rRNA.

One of the primary rRNA binding proteins, it binds directly to 16S rRNA where it helps nucleate assembly of the platform of the 30S subunit by binding and bridging several RNA helices of the 16S rRNA. Its function is as follows. Forms an intersubunit bridge (bridge B4) with the 23S rRNA of the 50S subunit in the ribosome. In Wolinella succinogenes (strain ATCC 29543 / DSM 1740 / CCUG 13145 / JCM 31913 / LMG 7466 / NCTC 11488 / FDC 602W) (Vibrio succinogenes), this protein is Small ribosomal subunit protein uS15.